The following is a 215-amino-acid chain: ATP phosphoribosyltransferase (215 aa).

This sequence belongs to the ATP phosphoribosyltransferase family. Short subfamily. As to quaternary structure, heteromultimer composed of HisG and HisZ subunits.

Its subcellular location is the cytoplasm. The enzyme catalyses 1-(5-phospho-beta-D-ribosyl)-ATP + diphosphate = 5-phospho-alpha-D-ribose 1-diphosphate + ATP. The protein operates within amino-acid biosynthesis; L-histidine biosynthesis; L-histidine from 5-phospho-alpha-D-ribose 1-diphosphate: step 1/9. In terms of biological role, catalyzes the condensation of ATP and 5-phosphoribose 1-diphosphate to form N'-(5'-phosphoribosyl)-ATP (PR-ATP). Has a crucial role in the pathway because the rate of histidine biosynthesis seems to be controlled primarily by regulation of HisG enzymatic activity. This chain is ATP phosphoribosyltransferase, found in Lachnoclostridium phytofermentans (strain ATCC 700394 / DSM 18823 / ISDg) (Clostridium phytofermentans).